The primary structure comprises 370 residues: Neutral protease 2 homolog AFUA_4G13750 (370 aa).

The N-terminal stretch at 1 to 19 (MKVTILASAILALINGALA) is a signal peptide. Positions 20–172 (LPANTPTLDV…PQAIKLLDRR (153 aa)) are excised as a propeptide. Disulfide bonds link Cys178–Cys250 and Cys257–Cys275. His300 serves as a coordination point for Zn(2+). Glu301 is a catalytic residue. The Zn(2+) site is built by His304 and Asp315.

It belongs to the peptidase M35 family. Requires Zn(2+) as cofactor.

It localises to the secreted. The catalysed reaction is Preferential cleavage of bonds with hydrophobic residues in P1'. Also 3-Asn-|-Gln-4 and 8-Gly-|-Ser-9 bonds in insulin B chain.. Functionally, secreted metalloproteinase that allows assimilation of proteinaceous substrates. Shows high activities on basic nuclear substrates such as histone and protamine. May be involved in virulence. The polypeptide is Neutral protease 2 homolog AFUA_4G13750 (Aspergillus fumigatus (strain ATCC MYA-4609 / CBS 101355 / FGSC A1100 / Af293) (Neosartorya fumigata)).